A 646-amino-acid chain; its full sequence is Glutamine--tRNA ligase protein virJ (646 aa).

Residues 25-65 (NELKKRIQKRARKAAAAANRSNAQQEKGNKPAANKPAAKPE) are disordered. The span at 38 to 61 (AAAAANRSNAQQEKGNKPAANKPA) shows a compositional bias: low complexity. A 'HIGH' region motif is present at residues 98 to 108 (PEPNGYLHLGH). ATP contacts are provided by residues 99–101 (EPN) and 105–111 (HLGHAKA). L-glutamine-binding residues include D147 and Y296. Residues T315, 344–345 (RL), and 352–354 (MSK) each bind ATP. Positions 351-355 (IMSKR) match the 'KMSKS' region motif.

Belongs to the class-I aminoacyl-tRNA synthetase family.

It catalyses the reaction tRNA(Gln) + L-glutamine + ATP = L-glutaminyl-tRNA(Gln) + AMP + diphosphate. Its function is as follows. Glutamine--tRNA ligase; part of the gene cluster that mediates the biosynthesis of virensols and trichoxide, fungal natural products that contain or are derived from a salicylaldehyde core. VirJ does not seem to play any role in virensols and trichoxide biosynthesis. This Hypocrea virens (strain Gv29-8 / FGSC 10586) (Gliocladium virens) protein is Glutamine--tRNA ligase protein virJ.